The following is an 86-amino-acid chain: Muscarinic toxin 38 (86 aa).

A signal peptide spans 1 to 21 (MKTLLLTLVVVTIVCLDLGYT). 4 disulfides stabilise this stretch: Cys-24/Cys-45, Cys-38/Cys-63, Cys-67/Cys-78, and Cys-79/Cys-84.

It belongs to the three-finger toxin family. Short-chain subfamily. Aminergic toxin sub-subfamily. Monomer. Expressed by the venom gland.

Its subcellular location is the secreted. In terms of biological role, binds to the muscarinic acetylcholine receptor (CHRM). The sequence is that of Muscarinic toxin 38 from Ophiophagus hannah (King cobra).